Reading from the N-terminus, the 345-residue chain is uncharacterized protein (345 aa).

PDZ GRASP-type domains follow at residues 27–112 (CGFR…WASI) and 118–207 (AIWH…HGVL). The tract at residues 27–223 (CGFRVLKVEN…LSGPPPQPGD (197 aa)) is GRASP. The segment at 229 to 345 (PMLGGPDHKV…APQNEELVKN (117 aa)) is disordered. Over residues 297-308 (KLSRELDHKTKD) the composition is skewed to basic and acidic residues. 2 stretches are compositionally biased toward polar residues: residues 309-318 (ASSTNDSQTT) and 328-338 (VNSTNDESAPQ).

The protein resides in the golgi apparatus membrane. This is an uncharacterized protein from Schizosaccharomyces pombe (strain 972 / ATCC 24843) (Fission yeast).